Here is a 374-residue protein sequence, read N- to C-terminus: Cathepsin W (374 aa).

Positions 1–21 (MAITVYLSCLLVLSMAGLAQG) are cleaved as a signal peptide. Positions 22 to 127 (IKSSLRSQDP…EVGSEEWGES (106 aa)) are excised as a propeptide. Cystine bridges form between Cys150–Cys191 and Cys184–Cys226. Residue Cys153 is part of the active site. N-linked (GlcNAc...) asparagine glycosylation is present at Asn205. Residues His291 and Asn329 contribute to the active site. Asn347 carries N-linked (GlcNAc...) asparagine glycosylation.

It belongs to the peptidase C1 family.

The protein localises to the endoplasmic reticulum. Functionally, may have a specific function in the mechanism or regulation of T-cell cytolytic activity. This chain is Cathepsin W (CTSW), found in Felis catus (Cat).